The chain runs to 140 residues: Nucleoside diphosphate kinase (140 aa).

Residues Lys-11, Phe-59, Arg-87, Thr-93, Arg-104, and Asn-114 each coordinate ATP. The active-site Pros-phosphohistidine intermediate is His-117.

The protein belongs to the NDK family. Homotetramer. Mg(2+) is required as a cofactor.

It localises to the cytoplasm. It catalyses the reaction a 2'-deoxyribonucleoside 5'-diphosphate + ATP = a 2'-deoxyribonucleoside 5'-triphosphate + ADP. The enzyme catalyses a ribonucleoside 5'-diphosphate + ATP = a ribonucleoside 5'-triphosphate + ADP. Functionally, major role in the synthesis of nucleoside triphosphates other than ATP. The ATP gamma phosphate is transferred to the NDP beta phosphate via a ping-pong mechanism, using a phosphorylated active-site intermediate. This chain is Nucleoside diphosphate kinase, found in Rhizorhabdus wittichii (strain DSM 6014 / CCUG 31198 / JCM 15750 / NBRC 105917 / EY 4224 / RW1) (Sphingomonas wittichii).